The primary structure comprises 276 residues: Large ribosomal subunit protein uL2 (276 aa).

The segment at 219–276 (TVRGSAMNPNDHPHGGGEGRTSIGRPAPVTPWGKPALGYKTRDSKKASNKMIVSRRKK) is disordered.

This sequence belongs to the universal ribosomal protein uL2 family. In terms of assembly, part of the 50S ribosomal subunit. Forms a bridge to the 30S subunit in the 70S ribosome.

Its function is as follows. One of the primary rRNA binding proteins. Required for association of the 30S and 50S subunits to form the 70S ribosome, for tRNA binding and peptide bond formation. It has been suggested to have peptidyltransferase activity; this is somewhat controversial. Makes several contacts with the 16S rRNA in the 70S ribosome. The protein is Large ribosomal subunit protein uL2 of Alkaliphilus oremlandii (strain OhILAs) (Clostridium oremlandii (strain OhILAs)).